The following is an 84-amino-acid chain: Large ribosomal subunit protein bL27 (84 aa).

The disordered stretch occupies residues 1-21 (MAHKKGASSTRNGRDSNAQRL). Residues 7–19 (ASSTRNGRDSNAQ) show a composition bias toward polar residues.

This sequence belongs to the bacterial ribosomal protein bL27 family.

This Clavibacter michiganensis subsp. michiganensis (strain NCPPB 382) protein is Large ribosomal subunit protein bL27.